The chain runs to 310 residues: N-acetyl-gamma-glutamyl-phosphate reductase (310 aa).

The active site involves Cys-116.

This sequence belongs to the NAGSA dehydrogenase family. Type 2 subfamily.

The protein resides in the cytoplasm. It catalyses the reaction N-acetyl-L-glutamate 5-semialdehyde + phosphate + NADP(+) = N-acetyl-L-glutamyl 5-phosphate + NADPH + H(+). Its pathway is amino-acid biosynthesis; L-arginine biosynthesis; N(2)-acetyl-L-ornithine from L-glutamate: step 3/4. In terms of biological role, catalyzes the NADPH-dependent reduction of N-acetyl-5-glutamyl phosphate to yield N-acetyl-L-glutamate 5-semialdehyde. The protein is N-acetyl-gamma-glutamyl-phosphate reductase of Chelativorans sp. (strain BNC1).